Here is a 1928-residue protein sequence, read N- to C-terminus: Lactase/phlorizin hydrolase (1928 aa).

Residues 1–21 (MELPWTALFLSTVLLGLSCQG) form the signal peptide. Positions 22–867 (SDWESDRNFI…LPVRADFTSR (846 aa)) are cleaved as a propeptide — XBetaGly. Residues 22 to 1883 (SDWESDRNFI…LMLGIAEAQT (1862 aa)) lie on the Extracellular side of the membrane. The interval 46–289 (NYPPGKQGSD…FIYTLKLEDC (244 aa)) is glycosyl hydrolase-1 1; Region I. The glycosyl hydrolase-1 2; Region II stretch occupies residues 364–856 (VWAAFANQSR…GFSAKKVKRN (493 aa)). N-linked (GlcNAc...) asparagine glycans are attached at residues N370, N514, N824, N936, N948, N991, and N1037. The glycosyl hydrolase-1 3; Region III. Phlorizin hydrolase/Glycosylceramidase activity stretch occupies residues 904-1367 (RFRDDFLWGV…DLIANNGMPL (464 aa)). Catalysis depends on E1067, which acts as the Proton donor; for phlorizin hydrolase/Glycosylceramidase activity. Residues N1176 and N1240 are each glycosylated (N-linked (GlcNAc...) asparagine). E1274 functions as the Nucleophile; for phlorizin hydrolase/Glycosylceramidase activity in the catalytic mechanism. Residues N1281 and N1509 are each glycosylated (N-linked (GlcNAc...) asparagine). The segment at 1374–1847 (LYGEFPKGFI…CNGFPDPAQG (474 aa)) is glycosyl hydrolase-1 4; Region IV. Lactase activity. The active-site Proton donor; for lactase activity is E1539. N-linked (GlcNAc...) asparagine glycans are attached at residues N1657 and N1684. Residue E1750 is the Nucleophile; for lactase activity of the active site. N-linked (GlcNAc...) asparagine glycans are attached at residues N1762 and N1815. The helical transmembrane segment at 1884 to 1902 (ALYVLFALLLLGACSLAFL) threads the bilayer. Over 1903–1928 (TYNTGRRSKQGNAQPSQHQLSPISSF) the chain is Cytoplasmic.

The protein belongs to the glycosyl hydrolase 1 family. In terms of assembly, homodimer. Post-translationally, N-glycosylated. Intestine.

It localises to the apical cell membrane. The enzyme catalyses lactose + H2O = beta-D-galactose + D-glucose. It carries out the reaction phlorizin + H2O = phloretin + beta-D-glucose. It catalyses the reaction D-cellobiose + H2O = beta-D-glucose + D-glucose. The catalysed reaction is quercetin 4'-O-beta-D-glucoside + H2O = quercetin + beta-D-glucose. The enzyme catalyses quercetin 3-O-beta-D-glucoside + H2O = quercetin + beta-D-glucose. It carries out the reaction kaempferol 3-O-beta-D-glucoside + H2O = kaempferol + beta-D-glucose. It catalyses the reaction luteolin 7-O-beta-D-glucoside + H2O = luteolin + beta-D-glucose. The catalysed reaction is luteolin 4'-O-beta-D-glucoside + H2O = luteolin + beta-D-glucose. The enzyme catalyses (2S)-naringenin 7-O-beta-D-glucoside + H2O = (2S)-naringenin + beta-D-glucose. It carries out the reaction eriodictyol-7-O-beta-D-glucoside + H2O = (S)-eriodictyol + beta-D-glucose. It catalyses the reaction apigenin 7-O-beta-D-glucoside + H2O = apigenin + beta-D-glucose. The catalysed reaction is daidzein 7-O-beta-D-glucoside + H2O = daidzein + beta-D-glucose + H(+). The enzyme catalyses genistein 7-O-beta-D-glucoside + H2O = genistein + beta-D-glucose. It carries out the reaction a beta-D-galactosyl-N-acylsphingosine + H2O = a ceramide + beta-D-galactose.. It catalyses the reaction beta-D-glucosyl-(1&lt;-&gt;1')-N-hexadecanoylsphing-4-enine + H2O = N-hexadecanoylsphing-4-enine + beta-D-glucose. The catalysed reaction is beta-D-galactosyl-(1&lt;-&gt;1')-N-hexadecanoylsphing-4-enine + H2O = beta-D-galactose + N-hexadecanoylsphing-4-enine. The enzyme catalyses beta-D-galactosyl-(1&lt;-&gt;1')-N-hexadecanoylsphinganine + H2O = N-hexadecanoylsphinganine + beta-D-galactose. It carries out the reaction beta-D-glucosyl-(1&lt;-&gt;1')-N-hexadecanoylsphinganine + H2O = N-hexadecanoylsphinganine + beta-D-glucose. Its function is as follows. Broad specificity glycosidase of the intestinal brush border membrane that hydrolyzes lactose, the main sugar in mammalian milk, to produce D-glucose and D-galactose. The mature protein is composed of two domains that catalyze the hydrolysis of beta-glucopyranosides and beta-galactopyranosides, with a preference for hydrophilic aglycones (in lactose and cellobiose) for one domain and hydrophobic aglycones (in phlorizin and glycosylceramides) for the other. The chain is Lactase/phlorizin hydrolase from Rattus norvegicus (Rat).